Consider the following 664-residue polypeptide: MERVDHLADERNKAEFNVDDMKIVWAGSRHAFDVSNRMSRLVANDPVFEKSKRAVMSRKELFKNTLRKSVHAWKLINELRLSDEEGLKLRSFMDQPGFLDLHWGMFVPAIKGQGTEQQQQKWLSLATKMQIIGCYAQTELGHGSNVQGLETTATFDPKTDQFIIHSPTQTSSKWWPGGLGKVSTHAVIYARLITNGKDHGVHGFIVQLRSLDDHSPLPGITVGDIGMKFGNGAYNSMDNGFLMFDHFRIPRDQMLMRLSKVTREGKYVASDVPRQLVYGTMVYVRQSIVSNASTALARAVCIATRYSAVRRQFGSHDGGIETQVINYKTQQNRLFPLLASAYAFRFVGEWLKWLYTDVTKRLEASDFATLPEAHACTAGLKSMTTSATSDGIEECRKLCGGHGYLWCSGLPELFAVYVPACTYEGDNVVLQLQVARFLMKTVSQLGSGKAPSGTTAYMGRAKHLLQCSSGVRNARDWLNPGMVLEAFEARALRMAVTCANNLSKFENQEQGFSELLADLVEAATAHCQLIVVSKFIAKVEGDIEGKGVKKQLKNLCYIYALYLLHKHLGDFLSTNSVTPEQASLANQQLRSLYSQVRPNAVALVDAFDYTDQYLGSVLGRYDGNVYPKLFEEALKDPLNDSVVPDGYREYIRPLIKQRFRSAKL.

An FAD-binding site is contributed by 399-404 (CGGHGY). The Microbody targeting signal signature appears at 662 to 664 (AKL).

Belongs to the acyl-CoA oxidase family. It depends on FAD as a cofactor.

It localises to the peroxisome. It catalyses the reaction a 2,3-saturated acyl-CoA + O2 = a (2E)-enoyl-CoA + H2O2. Catalyzes the desaturation of acyl-CoAs to 2-trans-enoyl-CoAs. The chain is Putative peroxisomal acyl-coenzyme A oxidase 1.2 (ACX1.2) from Arabidopsis thaliana (Mouse-ear cress).